A 258-amino-acid polypeptide reads, in one-letter code: Isoprenyl transferase (258 aa).

The active site involves D24. D24 is a Mg(2+) binding site. Substrate contacts are provided by residues G25–R28, W29, R37, H41, and S69–E71. N72 functions as the Proton acceptor in the catalytic mechanism. Substrate is bound by residues W73, R75, R190, and R196–S198. E209 is a binding site for Mg(2+).

The protein belongs to the UPP synthase family. Homodimer. Requires Mg(2+) as cofactor.

Catalyzes the condensation of isopentenyl diphosphate (IPP) with allylic pyrophosphates generating different type of terpenoids. This is Isoprenyl transferase from Ralstonia nicotianae (strain ATCC BAA-1114 / GMI1000) (Ralstonia solanacearum).